Reading from the N-terminus, the 251-residue chain is MHIDLNSDLGESLGAWRMGDDAAMLGIVTSANVACGFHAGDAAGILATLRGAKERGVAVGAHVAYRDLAGFGRRNMDVASADLVADVIYQIGALQGLATAAGTRVTYVKPHGALYNTIARDARQARDVIAAIRAIDASLALVVLAGSPLERWAADAGLRVVAEAFADRAYTPQGTLVSRREPGAVLHDAGEVARRMLQLVREGTVRAIDGSTTRVRADSICVHGDSPGAVDMARAVRGALEREGIALRPFA.

This sequence belongs to the LamB/PxpA family. Forms a complex composed of PxpA, PxpB and PxpC.

The catalysed reaction is 5-oxo-L-proline + ATP + 2 H2O = L-glutamate + ADP + phosphate + H(+). Catalyzes the cleavage of 5-oxoproline to form L-glutamate coupled to the hydrolysis of ATP to ADP and inorganic phosphate. This chain is 5-oxoprolinase subunit A, found in Paracidovorax citrulli (strain AAC00-1) (Acidovorax citrulli).